The sequence spans 107 residues: Putative double-stranded DNA mimic protein Spro_2690 (107 aa).

This sequence belongs to the putative dsDNA mimic protein family.

Functionally, may act as a double-stranded DNA (dsDNA) mimic. Probably regulates the activity of a dsDNA-binding protein. The sequence is that of Putative double-stranded DNA mimic protein Spro_2690 from Serratia proteamaculans (strain 568).